Consider the following 1336-residue polypeptide: Glutamate receptor ionotropic, NMDA 2D (1336 aa).

The first 27 residues, 1-27 (MRGAGGPRGPRGPAKMLLLLALACASP), serve as a signal peptide directing secretion. At 28-582 (FPEEAPGPGG…SPSAFLEPYS (555 aa)) the chain is on the extracellular side. Residue Asn-92 is glycosylated (N-linked (GlcNAc...) asparagine). A disulfide bridge connects residues Cys-104 and Cys-348. 4 N-linked (GlcNAc...) asparagine glycosylation sites follow: Asn-352, Asn-366, Asn-384, and Asn-467. 2 cysteine pairs are disulfide-bonded: Cys-455–Cys-483 and Cys-462–Cys-484. 3 residues coordinate L-glutamate: Ser-539, Thr-541, and Arg-546. Asn-569 is a glycosylation site (N-linked (GlcNAc...) asparagine). A helical transmembrane segment spans residues 583 to 604 (PAVWVMMFVMCLTVVAVTVFIF). Topologically, residues 605–629 (EYLSPVGYNRSLATGKRPGGSTFTI) are cytoplasmic. The segment at residues 630 to 641 (GKSIWLLWALVF) is an intramembrane region (discontinuously helical). The interval 631-650 (KSIWLLWALVFNNSVPVENP) is pore-forming. The Cytoplasmic segment spans residues 642-653 (NNSVPVENPRGT). A helical transmembrane segment spans residues 654 to 674 (TSKIMVLVWAFFAVIFLASYT). At 675–843 (ANLAAFMIQE…EVMSSKLDID (169 aa)) the chain is on the extracellular side. Residues Ser-717, Thr-718, and Asp-759 each contribute to the L-glutamate site. Cys-773 and Cys-828 form a disulfide bridge. A helical transmembrane segment spans residues 844 to 867 (NMAGVFYMLLVAMGLSLLVFAWEH). The Cytoplasmic portion of the chain corresponds to 868–1336 (LVYWRLRHCL…AHFSSLESEV (469 aa)). Disordered stretches follow at residues 900–934 (EAAPPPAKPPPPPQPLPSPAYPAPRPAPGPAPFVP), 981–1123 (RAAP…SLGG), and 1225–1336 (RCGC…ESEV). Over residues 902–932 (APPPAKPPPPPQPLPSPAYPAPRPAPGPAPF) the composition is skewed to pro residues. A compositionally biased stretch (low complexity) spans 981 to 991 (RAAPRGAAGRP). A compositionally biased stretch (pro residues) spans 992–1006 (LSPPAAQPPQKPPPS). A compositionally biased stretch (low complexity) spans 1035-1044 (AAAATAVGPP). Positions 1074-1089 (PGAGGAGGTGGAGGGA) are enriched in gly residues. Residues 1091-1104 (AAPPPCRAAPPPCP) show a composition bias toward pro residues. A compositionally biased stretch (basic residues) spans 1225-1240 (RCGCPRSHPHRPRASH). The residue at position 1316 (Arg-1316) is an Omega-N-methylarginine. Ser-1326 bears the Phosphoserine mark. The PDZ-binding signature appears at 1334-1336 (SEV).

The protein belongs to the glutamate-gated ion channel (TC 1.A.10.1) family. NR2D/GRIN2D subfamily. As to quaternary structure, heterotetramer. Forms heterotetrameric channels composed of two GluN1/zeta subunits (GRIN1), and two identical GluN2/epsilon subunits (GRIN2A, GRIN2B, GRIN2C or GRIN2D) or GluN3 subunits (GRIN3A or GRIN3B) (in vitro). In vivo, the subunit composition may depend on the expression levels of the different subunits. Interacts with PDZ domains of PATJ and DLG4.

The protein localises to the cell membrane. It is found in the postsynaptic cell membrane. The catalysed reaction is Ca(2+)(in) = Ca(2+)(out). The enzyme catalyses Na(+)(in) = Na(+)(out). It carries out the reaction K(+)(in) = K(+)(out). Component of N-methyl-D-aspartate (NMDA) receptors (NMDARs) that function as heterotetrameric, ligand-gated cation channels with high calcium permeability and voltage-dependent block by Mg(2+). Participates in synaptic plasticity for learning and memory formation. Channel activation requires binding of the neurotransmitter L-glutamate to the GluN2 subunit, glycine or D-serine binding to the GluN1 subunit, plus membrane depolarization to eliminate channel inhibition by Mg(2+). NMDARs mediate simultaneously the potasium efflux and the influx of calcium and sodium. Each GluN2 subunit confers differential attributes to channel properties, including activation, deactivation and desensitization kinetics, pH sensitivity, Ca2(+) permeability, and binding to allosteric modulators. The chain is Glutamate receptor ionotropic, NMDA 2D from Homo sapiens (Human).